Reading from the N-terminus, the 398-residue chain is S-adenosylmethionine synthase (398 aa).

His16 provides a ligand contact to ATP. Residue Asp18 coordinates Mg(2+). Glu51 lines the K(+) pocket. The L-methionine site is built by Glu64 and Gln108. The interval 108-118 (QSADIAQGVDA) is flexible loop. Residues 176–178 (DSK), 242–243 (KF), Asp251, 257–258 (RK), Ala274, and Lys278 contribute to the ATP site. L-methionine is bound at residue Asp251. L-methionine is bound at residue Lys282.

Belongs to the AdoMet synthase family. In terms of assembly, homotetramer; dimer of dimers. It depends on Mg(2+) as a cofactor. K(+) is required as a cofactor.

It localises to the cytoplasm. It catalyses the reaction L-methionine + ATP + H2O = S-adenosyl-L-methionine + phosphate + diphosphate. Its pathway is amino-acid biosynthesis; S-adenosyl-L-methionine biosynthesis; S-adenosyl-L-methionine from L-methionine: step 1/1. Functionally, catalyzes the formation of S-adenosylmethionine (AdoMet) from methionine and ATP. The overall synthetic reaction is composed of two sequential steps, AdoMet formation and the subsequent tripolyphosphate hydrolysis which occurs prior to release of AdoMet from the enzyme. In Bradyrhizobium diazoefficiens (strain JCM 10833 / BCRC 13528 / IAM 13628 / NBRC 14792 / USDA 110), this protein is S-adenosylmethionine synthase.